Consider the following 137-residue polypeptide: MRILGLDVGTKTVGVAMSDEMGWTAQGLETIRINEERGHFGFDRISELVKQYNVDKIVVGLPKNMNGTIGPRGEACQQFAENLRNLLQLEVVMWDERLSTMAAERLLISADVSRKKRKQVIDKMAAVVILQGFLDSK.

This sequence belongs to the YqgF nuclease family.

It is found in the cytoplasm. Could be a nuclease involved in processing of the 5'-end of pre-16S rRNA. This Bacillus mycoides (strain KBAB4) (Bacillus weihenstephanensis) protein is Putative pre-16S rRNA nuclease.